A 173-amino-acid polypeptide reads, in one-letter code: Crossover junction endodeoxyribonuclease RuvC (173 aa).

Active-site residues include Asp8, Glu69, and Asp141. Positions 8, 69, and 141 each coordinate Mg(2+).

The protein belongs to the RuvC family. As to quaternary structure, homodimer which binds Holliday junction (HJ) DNA. The HJ becomes 2-fold symmetrical on binding to RuvC with unstacked arms; it has a different conformation from HJ DNA in complex with RuvA. In the full resolvosome a probable DNA-RuvA(4)-RuvB(12)-RuvC(2) complex forms which resolves the HJ. The cofactor is Mg(2+).

It is found in the cytoplasm. It carries out the reaction Endonucleolytic cleavage at a junction such as a reciprocal single-stranded crossover between two homologous DNA duplexes (Holliday junction).. The RuvA-RuvB-RuvC complex processes Holliday junction (HJ) DNA during genetic recombination and DNA repair. Endonuclease that resolves HJ intermediates. Cleaves cruciform DNA by making single-stranded nicks across the HJ at symmetrical positions within the homologous arms, yielding a 5'-phosphate and a 3'-hydroxyl group; requires a central core of homology in the junction. The consensus cleavage sequence is 5'-(A/T)TT(C/G)-3'. Cleavage occurs on the 3'-side of the TT dinucleotide at the point of strand exchange. HJ branch migration catalyzed by RuvA-RuvB allows RuvC to scan DNA until it finds its consensus sequence, where it cleaves and resolves the cruciform DNA. This is Crossover junction endodeoxyribonuclease RuvC from Xylella fastidiosa (strain Temecula1 / ATCC 700964).